A 228-amino-acid polypeptide reads, in one-letter code: Sugar fermentation stimulation protein homolog (228 aa).

It belongs to the SfsA family.

In Desulfitobacterium hafniense (strain Y51), this protein is Sugar fermentation stimulation protein homolog.